The primary structure comprises 1001 residues: Serine/threonine-protein kinase TAO1 (1001 aa).

A Phosphoserine modification is found at S9. One can recognise a Protein kinase domain in the interval 28-281 (FTDLREIGHG…SEELLKHMFV (254 aa)). Residues 34 to 42 (IGHGSFGAV) and K57 contribute to the ATP site. D151 functions as the Proton acceptor in the catalytic mechanism. Disordered stretches follow at residues 324 to 380 (PAVE…DKSE) and 404 to 433 (ENYQEEGDPRTRASDPQSPPQVSRHKSHYR). The segment covering 350–370 (SNQSIPSMSISASSQSSSVNS) has biased composition (low complexity). A phosphoserine mark is found at S421 and S445. A coiled-coil region spans residues 458 to 651 (SELREQMSGY…QTQKDLEHAM (194 aa)). Residues 567–587 (KEELNENQSTPKKEKQEWLSK) are disordered. The span at 577 to 587 (PKKEKQEWLSK) shows a compositional bias: basic and acidic residues. A Phosphothreonine modification is found at T669. A coiled-coil region spans residues 754-877 (KAVLKRLKEE…LERQAREIEA (124 aa)). A disordered region spans residues 905-1001 (PGASSWSHNP…ISNGSHMSYT (97 aa)). The segment covering 921–930 (HWGHPMGGTP) has biased composition (low complexity). S965 carries the post-translational modification Phosphoserine. Residues 975–1001 (GGRTEQGMSRSTSVTSQISNGSHMSYT) show a composition bias toward polar residues.

The protein belongs to the protein kinase superfamily. STE Ser/Thr protein kinase family. STE20 subfamily. As to quaternary structure, self-associates. Interacts with MAP2K3. Interacts with SPRED1. Interacts with TESK1; the interaction inhibits TAOK1 kinase activity. Interacts with MAP3K7. In terms of processing, proteolytically processed by caspase-3 (CASP3). Autophosphorylated. Phosphorylated by ATM in response to DNA damage. Phosphorylated by LRRK2.

The protein localises to the cytoplasm. It carries out the reaction L-seryl-[protein] + ATP = O-phospho-L-seryl-[protein] + ADP + H(+). The catalysed reaction is L-threonyl-[protein] + ATP = O-phospho-L-threonyl-[protein] + ADP + H(+). With respect to regulation, serine/threonine-protein kinase activity is inhibited by SPRED1. Its function is as follows. Serine/threonine-protein kinase involved in various processes such as p38/MAPK14 stress-activated MAPK cascade, DNA damage response and regulation of cytoskeleton stability. Phosphorylates MAP2K3, MAP2K6 and MARK2. Acts as an activator of the p38/MAPK14 stress-activated MAPK cascade by mediating phosphorylation and subsequent activation of the upstream MAP2K3 and MAP2K6 kinases. Involved in G-protein coupled receptor signaling to p38/MAPK14. In response to DNA damage, involved in the G2/M transition DNA damage checkpoint by activating the p38/MAPK14 stress-activated MAPK cascade, probably by mediating phosphorylation of MAP2K3 and MAP2K6. Acts as a regulator of cytoskeleton stability by phosphorylating 'Thr-208' of MARK2, leading to activate MARK2 kinase activity and subsequent phosphorylation and detachment of MAPT/TAU from microtubules. Also acts as a regulator of apoptosis: regulates apoptotic morphological changes, including cell contraction, membrane blebbing and apoptotic bodies formation via activation of the MAPK8/JNK cascade. During fetal development, it plays an essential role in the regulation of neuronal differentiation and migration to the cortical plate. The sequence is that of Serine/threonine-protein kinase TAO1 (Taok1) from Mus musculus (Mouse).